The following is a 463-amino-acid chain: Carnosine N-methyltransferase (463 aa).

Disordered stretches follow at residues 1–64 (MTKN…SQLK) and 79–104 (KHNH…EKEE). The span at 9–58 (KSNNSNISNNNNNNNNNNNNNNNNNNNNNNNNNNNNNNNNNNNNNNNNKN) shows a compositional bias: low complexity. Positions 79-93 (KHNHDHSHDHNHDYD) are enriched in basic and acidic residues. Over residues 94–103 (DNNEDDEEKE) the composition is skewed to acidic residues. Residues Gln215, Arg218, Gly260, Glu281, Asp351, Phe352, and Cys367 each contribute to the S-adenosyl-L-methionine site. Asp371 serves as a coordination point for carnosine. Tyr379 is an S-adenosyl-L-methionine binding site. His402 and Tyr450 together coordinate carnosine.

It belongs to the carnosine N-methyltransferase family.

The enzyme catalyses carnosine + S-adenosyl-L-methionine = anserine + S-adenosyl-L-homocysteine + H(+). Functionally, N-methyltransferase that mediates the formation of anserine (beta-alanyl-N(Pi)-methyl-L-histidine) from carnosine. The protein is Carnosine N-methyltransferase of Dictyostelium discoideum (Social amoeba).